We begin with the raw amino-acid sequence, 423 residues long: D-tagatose-1,6-bisphosphate aldolase subunit GatZ (423 aa).

The protein belongs to the GatZ/KbaZ family. GatZ subfamily. In terms of assembly, forms a complex with GatY.

It participates in carbohydrate metabolism; D-tagatose 6-phosphate degradation; D-glyceraldehyde 3-phosphate and glycerone phosphate from D-tagatose 6-phosphate: step 2/2. Functionally, component of the tagatose-1,6-bisphosphate aldolase GatYZ that is required for full activity and stability of the Y subunit. Could have a chaperone-like function for the proper and stable folding of GatY. When expressed alone, GatZ does not show any aldolase activity. Is involved in the catabolism of galactitol. The polypeptide is D-tagatose-1,6-bisphosphate aldolase subunit GatZ (Salmonella typhimurium (strain LT2 / SGSC1412 / ATCC 700720)).